A 362-amino-acid chain; its full sequence is MADEQFPAAATALEEYQSIEEQMASPEVVSNPDKLRKLGRRHAELGAIVGAYKAWLQVKDDLAAAQEMAGEDADFAEEAKRLEDELPGVEEKLRTALIPRDPDDARDTIMEIKAGTGGEEAALFAGDLLRMYTRYAEKRGWSVNVQSENTTELGGVKDVQIAIRAKGTPAPEDGVWASMKYEGGVHRVQRIPVTESQGRIQTSAAGVIVFPEADEDDDEIEIDPKDLKIDIFMSSGPGGQSVNTTYSAVRMTHLPTGITVNMQDEKSQIQNRAAALRVLKSRLLAMKHEQEAAEAADMRHSQVRSLDRSERIRTYNFPENRIVDHRTNYKAYNLDAVLDGDLQAVIDSDIQADEADRLANQK.

Gln240 is subject to N5-methylglutamine.

The protein belongs to the prokaryotic/mitochondrial release factor family. In terms of processing, methylated by PrmC. Methylation increases the termination efficiency of RF1.

It is found in the cytoplasm. Its function is as follows. Peptide chain release factor 1 directs the termination of translation in response to the peptide chain termination codons UAG and UAA. The protein is Peptide chain release factor 1 of Bifidobacterium longum (strain NCC 2705).